The sequence spans 2176 residues: MDPNNLQNSLNGTGNPNFQPVQTNAGGFGHQMAQTGAAAAAAATGQYNPMLLQQQYLNFGFGMNYNNQLFDFQAQQQQQQQYLMQQQQQQQQLHHQQQQQHQNIAQPQAQHHQMNMFTQHQMLQLMQQQQQQQQQQPVQQIQRQQPIAQPIPQHTIPPSTSNQFQQQIQSAASSIFDSSVISSHQKLYEEQCRQIEKERKEQEERKRKQELEEQRKRNEELKRLRIAEEKRLLEEQQRLREQMERERLAEIKRLEEAARLEDERRIAADIEAQKQAMLQKMQAEQNKHIAEVERQRSELEERFARVSQPMTLVGTHFLPNFLDMIPFPYESMVDSTLPQVFDMERDSAILESCDPQMVATISNILNATNIDDIITRMDKLRPDDKETNDLFLDKLPPIIQAVVNYNTSALDVDSHNDMELLENEDVMMTEDITRTTAPSTSSSSYNNHHQNSIVMMTSSSVSMSEATQSSSVTMNHHDVDEEGPAPISIEKRRQMMSVGKAPKAGGGGGQNQRKKRDMVENLYDSLTDNFVPTDTGRRGRRRGRGSDDDEDELLQRDLKLIEEMEKGVKLPASVTGFTTTEEDVQHFFGSQKKRRKEDRIRKDRSPTPEDVIESRDAEWQERLRLKMEREKSRKADEESQNAWSLQALADNETFTRFCQTVDGVLEQGDSLDTELKMPKNKKRRSGGDHHHKGDENSDESDEEEEMDEIDPDLRIELYILEELRRGSARLRENHALQAVGADKLLKLVAMLDRNIRDAISADNQRLLVPCDDDVDVGDVLEKEICEERVKRASDAAVVALNIMSSHRMHKQVIIEDVIDRCVGLTRLLLIHLIYPASDSIYKSVNSKKKDRAPEEARRRKKAGVCTRDKFSEYIYERITEAIGLLAVLVKSESMTDTSVHNVASVALTPFFVANVGSLQITAMLLASNIFSRAEDSLRFSMITDLLSSLHRAPQFTQKNSNNGYSLPDGSWISTTTALFIQLVQSTIKIPKFKKHADEDELAKRSKKEEAMVKEGFLKASKVTNAFLNGFLAKCSQKGNKMDGEEDYRILFSNFLQELLSALYSPEWPAAEMILTALGSLLVKNFRSKSSDMTIRQASLDYLGNITAKLRKDQKEAIAGERRLDAVVKKSFLLLSDKGVEDYESVDISNLKQNDKLKVLETSLIDYLVITNSSDIIVYACNFYVGEWYKEVAEDLESARSKLKQTVDTNESEKDVKKAERKYEKIQYRGAEMKVFLSKILDKKEIKRRLEKSNKVKMLDSDAFWAVKFLAQSREFTHSFDTYLKHIVFGAGSETIVALRSKALKCLSSIIEADSSVLILEDVQQAVHTRMVDSHAQVRESAVELIGRFVLYDEEYVRKYYSQIAERILDTGVAVRKRVIRIMREICEKFPTFEMIPDMLARMIRRVTDEEGVKKLVFETFTTLWFQPVDTRIYTNAVATKVTTMCSVAQHCIKDAMSDYLEQLILHIVKNGQEGSGMSVAVKQIIDSLVDHILNLEQHKSSENVSEVELMRRKEQEEKYMAYLSTLAVFSKIRPLLLTSHVEVLLPYLTFSGAKTNAENQVTKEMIGMLERVIPLVPFPSNIVLDSIDENLCKVIMFNGMALVVSAVSCVASIYKKFKRGATKTIDVFSTYLKHLEVIKRNFDSNPRYDLDPKLFPILSRSIFTLGVLSRYFQFEEFVKEDPTEEKVEALKEKVFITLEFFSRYHKGGLRQKALTAMGHFCAQHSTYLTKRQLTNTYLEILNAANSPQQQQQRILVLQNLEMFLQCEEQKLAASHDKWDENKEAQNLKEMELSGSGLGSSVIQKYWKAVLESYVDADIQLRRAAVQVVWLTLNQGLVTPGASIPTLIAMTTDPVDVIRNRIDILLKEIDSKYSGMVQSKAMQGVRLSYKLHLKLRMLQQEKFVRGFRFCDFHLNTLPNALPEKTHDGMAVLSGLYQSLRTNRQQRRSFLQSMVKLFSEEFSHDKPQLMEYIFIADNLAMFPYQMIDEPLYVMRQIDQNIAQTGQSLLVQYKLQLRMQESEDEDIVFLDENMMSRLSQLGQIETFHQLFLDSQVPSLLLYVRTFLMQLYGFNETKVAEYQPSEAAKVYEKAVTRRNIHMFKPITALEALNFPFEWGSFQHTAFLAEKICSFRKMLLSLDQVEEVEVSNTITAANDDYDEEEDGGEDSRGPIMEQMEH.

Polar residues predominate over residues 1–25 (MDPNNLQNSLNGTGNPNFQPVQTNA). Disordered stretches follow at residues 1–27 (MDPN…NAGG), 150–170 (PIPQ…QIQS), 464–483 (SEAT…DEEG), 495–514 (MMSV…NQRK), 523–551 (YDSL…DDED), 585–615 (QHFF…IESR), and 669–708 (DSLD…EMDE). Residues 464-473 (SEATQSSSVT) are compositionally biased toward low complexity. Basic and acidic residues-rich tracts occupy residues 597–615 (EDRI…IESR) and 685–695 (SGGDHHHKGDE). Residues 696 to 708 (NSDESDEEEEMDE) show a composition bias toward acidic residues. 7 HEAT repeats span residues 1280–1312 (DTYL…IIEA), 1320–1351 (EDVQ…FVLY), 1353–1388 (EEYV…ICEK), 1393–1426 (EMIP…LWFQ), 1692–1723 (EKVF…FCAQ), 1803–1834 (QKYW…TLNQ), and 1840–1871 (GASI…IDSK). The interval 2149 to 2176 (ITAANDDYDEEEDGGEDSRGPIMEQMEH) is disordered. A compositionally biased stretch (acidic residues) spans 2154–2163 (DDYDEEEDGG).

This sequence belongs to the SCC2/Nipped-B family. May heterodimerize with mau-2/SCC4 to form the cohesin loading complex.

It is found in the nucleus. Its subcellular location is the chromosome. Plays an important role in the loading of the cohesin complex on to meiotic chromosomes. Forms a heterodimeric complex (also known as cohesin loading complex) with mau-2/SCC4 which mediates the loading of the cohesin complex onto chromatin. Plays an essential role in cell division during embryonic development. Promotes normal chromosome organization during meiosis. Required for the assembly of the synaptonemal complex between homologous chromosomes to promote sister chromatid cohesion during meiosis. Required for chromosome segregation during mitosis and meiosis. Plays a role in DNA double-strand break (DSB) repair during meiotic recombination and promotes the assembly of the 9-1-1 cell-cycle checkpoint response complex which is required for inducing apoptosis in response to DNA damage, at DNA damage sites. The polypeptide is Nipped-B-like protein scc-2 (Caenorhabditis elegans).